We begin with the raw amino-acid sequence, 75 residues long: Insecticidal toxin OcyC10 (75 aa).

Residues 1–19 form the signal peptide; it reads MNFATKIVILLLVAALILA. 2 cysteine pairs are disulfide-bonded: C50-C62 and C56-C68.

Expressed by the venom gland.

It localises to the secreted. Insecticidal toxin. In Opisthacanthus cayaporum (South American scorpion), this protein is Insecticidal toxin OcyC10.